A 215-amino-acid polypeptide reads, in one-letter code: MTERGCFITVEGLEGAGKTTCLQAIEQMLLEAGIDRPLFTREPGGTPFGEALRGALLDPQYRGLTAEAEALTVFAARAEHLAQVIRPTLDAGRWVISDRFTDATYAYQGGGRGLGDERIAVLERWVHGGFTPDRTLLLDVDPTVGRSRVAHRGDGEDRFEQERDPFFQAARAAYARRAAADPERFRCIDANRPEGEVAEQVRAGVADLLPVGGRP.

ATP is bound at residue 12-19 (GLEGAGKT).

The protein belongs to the thymidylate kinase family.

It carries out the reaction dTMP + ATP = dTDP + ADP. In terms of biological role, phosphorylation of dTMP to form dTDP in both de novo and salvage pathways of dTTP synthesis. This Halorhodospira halophila (strain DSM 244 / SL1) (Ectothiorhodospira halophila (strain DSM 244 / SL1)) protein is Thymidylate kinase.